The chain runs to 130 residues: kinetoplast-associated protein 2-1 (130 aa).

A propeptide spanning residues methionine 1–alanine 10 is cleaved from the precursor. The segment at leucine 89–lysine 130 is disordered. A compositionally biased stretch (basic and acidic residues) spans lysine 92–glutamine 105. The span at lysine 106–lysine 130 shows a compositional bias: basic residues.

Belongs to the KAP family. In terms of assembly, associates with the kinetoplast DNA network.

Its subcellular location is the mitochondrion matrix. It is found in the kinetoplast. Histone H1-like DNA-binding protein involved in the organization and segregation of kinetoplast DNA (kDNA). The mitochondrial DNA of kinetoplastid protozoa consists of about 5,000 minicircles and 20 to 30 maxicircles. These circular DNAs are held together by catenation into a highly organized compact disk structure referred to as a kinetoplast DNA (kDNA) network. Binds preferentially to a specific fragment of minicircle DNA and is able to compact kDNA networks through DNA charge neutralization and condensation. This Crithidia fasciculata protein is kinetoplast-associated protein 2-1 (KAP2-1).